The chain runs to 224 residues: Orotate phosphoribosyltransferase (224 aa).

5-phospho-alpha-D-ribose 1-diphosphate is bound at residue Lys29. 37–38 lines the orotate pocket; that stretch reads FF. 5-phospho-alpha-D-ribose 1-diphosphate-binding positions include 75–76, Arg105, Lys106, Lys109, His111, and 130–138; these read YK and DDVITAGTS. Thr134 and Arg162 together coordinate orotate.

The protein belongs to the purine/pyrimidine phosphoribosyltransferase family. PyrE subfamily. In terms of assembly, homodimer. Mg(2+) serves as cofactor.

The catalysed reaction is orotidine 5'-phosphate + diphosphate = orotate + 5-phospho-alpha-D-ribose 1-diphosphate. The protein operates within pyrimidine metabolism; UMP biosynthesis via de novo pathway; UMP from orotate: step 1/2. Functionally, catalyzes the transfer of a ribosyl phosphate group from 5-phosphoribose 1-diphosphate to orotate, leading to the formation of orotidine monophosphate (OMP). This is Orotate phosphoribosyltransferase from Bordetella parapertussis (strain 12822 / ATCC BAA-587 / NCTC 13253).